A 470-amino-acid chain; its full sequence is Properdin (470 aa).

Positions 1–26 (MTAPVQVPQSLLLLLMLLLTLPATGS) are cleaved as a signal peptide. 7 consecutive TSP type-1 domains span residues 27-75 (DPVL…QACR), 76-133 (SPRW…QCCP), 135-190 (MGGW…QVCP), 192-254 (HGAW…PPCP), 256-312 (AGGW…VPCP), 314-376 (DGEW…QNCI), and 380-463 (KGSW…PACK). 3 disulfides stabilise this stretch: Cys-31–Cys-55, Cys-42–Cys-71, and Cys-56–Cys-74. C-linked (Man) tryptophan glycans are attached at residues Trp-82 and Trp-85. Intrachain disulfides connect Cys-88–Cys-126, Cys-92–Cys-132, Cys-103–Cys-110, Cys-131–Cys-169, Cys-147–Cys-183, Cys-151–Cys-189, and Cys-162–Cys-173. Trp-138, Trp-141, and Trp-144 each carry a C-linked (Man) tryptophan glycan. O-linked (Fuc...) threonine glycosylation occurs at Thr-150. Residues Trp-195, Trp-198, and Trp-201 are each glycosylated (C-linked (Man) tryptophan). Cystine bridges form between Cys-204–Cys-247, Cys-208–Cys-253, and Cys-223–Cys-237. Residue Ser-207 is glycosylated (O-linked (Fuc...) serine). 2 C-linked (Man) tryptophan glycosylation sites follow: Trp-259 and Trp-262. Disulfide bonds link Cys-268-Cys-305, Cys-272-Cys-311, and Cys-283-Cys-295. Thr-271 carries O-linked (Fuc...) threonine glycosylation. Residues Trp-320 and Trp-323 are each glycosylated (C-linked (Man) tryptophan). Cystine bridges form between Cys-326–Cys-369, Cys-336–Cys-375, and Cys-349–Cys-359. An interaction with Complement C3 beta chain region spans residues 350–358 (KGRKFNGQR). C-linked (Man) tryptophan glycosylation is found at Trp-383, Trp-386, and Trp-389. Intrachain disulfides connect Cys-392/Cys-456, Cys-396/Cys-462, and Cys-408/Cys-440. Asn-429 carries N-linked (GlcNAc...) asparagine glycosylation.

In plasma, properdin exists as dimers, trimers or tetramers in the relative proportions of 26:54:20. Interacts with the pro-C3-convertase enzyme complex (C3b-Bb) comprised of Complement C3 beta chain (C3b) and the Complement factor B Bb fragment (Bb), where it binds (via its TSP type-1 5 domain) with C3b and Bb. This interaction stabilizes the complex and allows it to become the active C3-convertase enzyme complex (C3b-Bb-FP). Interacts with C3b. Interacts with CFB.

It localises to the secreted. Functionally, a positive regulator of the alternate pathway of complement. It binds to and stabilizes the C3- and C5-convertase enzyme complexes. Inhibits CFI-CFH mediated degradation of Inhibits CFI-CFH mediated degradation of Complement C3 beta chain (C3b). In Cavia porcellus (Guinea pig), this protein is Properdin (CFP).